A 257-amino-acid polypeptide reads, in one-letter code: Neurotrophin-3 (257 aa).

The signal sequence occupies residues 1–18 (MSILFYVIFLAYLRGIQS). Residues 19-138 (TNMDQRSLPE…VLNRTSRRKR (120 aa)) constitute a propeptide that is removed on maturation. The N-linked (GlcNAc...) asparagine glycan is linked to asparagine 131. Cystine bridges form between cysteine 152–cysteine 217, cysteine 195–cysteine 246, and cysteine 205–cysteine 248.

This sequence belongs to the NGF-beta family. In terms of tissue distribution, in the embryo, the expression peak at E4.5 and decreases at later stages of development.

The protein localises to the secreted. In terms of biological role, seems to promote the survival of visceral and proprioceptive sensory neurons. The polypeptide is Neurotrophin-3 (NTF3) (Gallus gallus (Chicken)).